Here is a 56-residue protein sequence, read N- to C-terminus: uncharacterized protein (56 aa).

A run of 2 helical transmembrane segments spans residues 6-26 (VILL…LLNG) and 29-49 (VDFL…FVVV).

It localises to the cell membrane. This is an uncharacterized protein from Bacillus subtilis (strain 168).